The primary structure comprises 38 residues: Photosystem II reaction center protein M (38 aa).

A helical transmembrane segment spans residues 5-25 (ILGLIATALFIVIPTSFLLIL).

This sequence belongs to the PsbM family. As to quaternary structure, PSII is composed of 1 copy each of membrane proteins PsbA, PsbB, PsbC, PsbD, PsbE, PsbF, PsbH, PsbI, PsbJ, PsbK, PsbL, PsbM, PsbT, PsbX, PsbY, PsbZ, Psb30/Ycf12, at least 3 peripheral proteins of the oxygen-evolving complex and a large number of cofactors. It forms dimeric complexes.

It is found in the plastid. It localises to the cyanelle thylakoid membrane. Functionally, one of the components of the core complex of photosystem II (PSII). PSII is a light-driven water:plastoquinone oxidoreductase that uses light energy to abstract electrons from H(2)O, generating O(2) and a proton gradient subsequently used for ATP formation. It consists of a core antenna complex that captures photons, and an electron transfer chain that converts photonic excitation into a charge separation. This subunit is found at the monomer-monomer interface. The chain is Photosystem II reaction center protein M from Cyanophora paradoxa.